The primary structure comprises 101 residues: MIPGEIIAASGDIELNVGAPTVTLEVSNTGDRPVQVGSHYHFAETNGGLSFDRDKARGMRLDIPAGTAVRFEPGQTRSVTLIPLSGKREVYGFRQQVMGKL.

This sequence belongs to the urease beta subunit family. As to quaternary structure, heterotrimer of UreA (gamma), UreB (beta) and UreC (alpha) subunits. Three heterotrimers associate to form the active enzyme.

It is found in the cytoplasm. It catalyses the reaction urea + 2 H2O + H(+) = hydrogencarbonate + 2 NH4(+). It participates in nitrogen metabolism; urea degradation; CO(2) and NH(3) from urea (urease route): step 1/1. The protein is Urease subunit beta of Rhizobium rhizogenes (strain K84 / ATCC BAA-868) (Agrobacterium radiobacter).